Consider the following 444-residue polypeptide: UDP-N-acetylmuramoylalanine--D-glutamate ligase (444 aa).

109-115 (GSNGKTT) is an ATP binding site.

It belongs to the MurCDEF family.

Its subcellular location is the cytoplasm. The enzyme catalyses UDP-N-acetyl-alpha-D-muramoyl-L-alanine + D-glutamate + ATP = UDP-N-acetyl-alpha-D-muramoyl-L-alanyl-D-glutamate + ADP + phosphate + H(+). The protein operates within cell wall biogenesis; peptidoglycan biosynthesis. Functionally, cell wall formation. Catalyzes the addition of glutamate to the nucleotide precursor UDP-N-acetylmuramoyl-L-alanine (UMA). The protein is UDP-N-acetylmuramoylalanine--D-glutamate ligase of Bacteroides fragilis (strain ATCC 25285 / DSM 2151 / CCUG 4856 / JCM 11019 / LMG 10263 / NCTC 9343 / Onslow / VPI 2553 / EN-2).